The chain runs to 530 residues: Structure-specific endonuclease subunit SLX1 homolog 2 (530 aa).

One can recognise a GIY-YIG domain in the interval 4–89 (RFHCVYLLTS…PTKSTRLKTQ (86 aa)). An SLX1-type zinc finger spans residues 232–365 (CALCSLPLRS…PSQPCPCPLC (134 aa)). 3 disordered regions span residues 276–306 (ATMG…MDAH), 410–438 (NSSL…YCGD), and 474–502 (LPPS…RMTD). Residues 283 to 298 (RNERSGEYSNKIKDDS) show a composition bias toward basic and acidic residues.

This sequence belongs to the SLX1 family. As to quaternary structure, forms a heterodimer with a member of the SLX4 family. A divalent metal cation serves as cofactor.

The protein resides in the nucleus. Its function is as follows. Catalytic subunit of a heterodimeric structure-specific endonuclease that resolves DNA secondary structures generated during DNA repair and recombination. Has endonuclease activity towards branched DNA substrates, introducing single-strand cuts in duplex DNA close to junctions with ss-DNA. The polypeptide is Structure-specific endonuclease subunit SLX1 homolog 2 (Trypanosoma cruzi (strain CL Brener)).